Here is a 1123-residue protein sequence, read N- to C-terminus: Alpha-mannosidase E (1123 aa).

A signal peptide spans 1-21; it reads MNKTKLIKIIFVIGVWILLST. N-linked (GlcNAc...) asparagine glycans are attached at residues asparagine 2 and asparagine 38. Residues 22 to 1072 are Extracellular-facing; it reads FIINIYNENF…KYNRPNHLAL (1051 aa). 2 residues coordinate Zn(2+): histidine 67 and aspartate 69. An N-linked (GlcNAc...) asparagine glycan is attached at asparagine 140. Zn(2+) contacts are provided by aspartate 150 and histidine 409. The active-site Nucleophile is aspartate 150. 6 N-linked (GlcNAc...) asparagine glycosylation sites follow: asparagine 521, asparagine 675, asparagine 858, asparagine 887, asparagine 975, and asparagine 990. The chain crosses the membrane as a helical span at residues 1073–1093; it reads ILSLSIGTPAGILIIVIALVV. At 1094 to 1123 the chain is on the cytoplasmic side; the sequence is IYKKRKNRKTLTSSYSLLNLILKDRADSSP.

It belongs to the glycosyl hydrolase 38 family. It depends on Zn(2+) as a cofactor.

It localises to the membrane. It catalyses the reaction Hydrolysis of terminal, non-reducing alpha-D-mannose residues in alpha-D-mannosides.. The protein is Alpha-mannosidase E (manE) of Dictyostelium discoideum (Social amoeba).